A 327-amino-acid polypeptide reads, in one-letter code: N-acetyl-gamma-glutamyl-phosphate reductase (327 aa).

The active site involves Cys-136.

This sequence belongs to the NAGSA dehydrogenase family. Type 1 subfamily.

Its subcellular location is the cytoplasm. The enzyme catalyses N-acetyl-L-glutamate 5-semialdehyde + phosphate + NADP(+) = N-acetyl-L-glutamyl 5-phosphate + NADPH + H(+). It participates in amino-acid biosynthesis; L-arginine biosynthesis; N(2)-acetyl-L-ornithine from L-glutamate: step 3/4. Functionally, catalyzes the NADPH-dependent reduction of N-acetyl-5-glutamyl phosphate to yield N-acetyl-L-glutamate 5-semialdehyde. In Xylella fastidiosa (strain M23), this protein is N-acetyl-gamma-glutamyl-phosphate reductase.